The primary structure comprises 343 residues: Single-pass membrane and coiled-coil domain-containing protein 2 (343 aa).

The span at 86–99 shows a compositional bias: basic and acidic residues; sequence EHDQDLSKQDKQET. The tract at residues 86-108 is disordered; the sequence is EHDQDLSKQDKQETDVDEDPQAS. A coiled-coil region spans residues 152–238; it reads TEKIDNIIKK…SAKLRMYQME (87 aa). A helical transmembrane segment spans residues 284–304; it reads IFIMFDVLTVTGLLCYILFFG.

The protein resides in the membrane. This Homo sapiens (Human) protein is Single-pass membrane and coiled-coil domain-containing protein 2 (SMCO2).